The primary structure comprises 245 residues: Lactate utilization protein A (245 aa).

Belongs to the LutA/YkgE family.

In terms of biological role, is involved in L-lactate degradation and allows cells to grow with lactate as the sole carbon source. This is Lactate utilization protein A from Macrococcus caseolyticus (strain JCSC5402) (Macrococcoides caseolyticum).